The primary structure comprises 187 residues: HTH-type transcriptional regulator NfxB (187 aa).

The segment at residues 26–45 (LKELAEAAGVSKATLHRFCG) is a DNA-binding region (H-T-H motif).

Its function is as follows. Confers resistance to guinolones. May negatively regulate the expression of genes that are associated with cell permeability to drugs. The polypeptide is HTH-type transcriptional regulator NfxB (nfxB) (Pseudomonas aeruginosa (strain ATCC 15692 / DSM 22644 / CIP 104116 / JCM 14847 / LMG 12228 / 1C / PRS 101 / PAO1)).